The chain runs to 548 residues: T-complex protein 1 subunit theta (548 aa).

A2 bears the N-acetylalanine mark. The ADP site is built by Y47 and G48. D99 is a binding site for Mg(2+). ADP is bound by residues G100, T101, N102, F103, M169, S170, K171, G412, and D499. The ATP site is built by G100, T101, and N102. The ATP site is built by S170, K171, G412, D499, and K504. A Phosphotyrosine modification is found at Y505. The tract at residues 529–548 is disordered; the sequence is PAGGPKPPSGKKDWDEDQND.

In terms of assembly, component of the chaperonin-containing T-complex (TRiC), a hexadecamer composed of two identical back-to-back stacked rings enclosing a protein folding chamber. Each ring is made up of eight different subunits: TCP1/CCT1, CCT2, CCT3, CCT4, CCT5, CCT6A/CCT6, CCT7, CCT8.

It is found in the cytoplasm. The protein localises to the cytoskeleton. Its subcellular location is the microtubule organizing center. It localises to the centrosome. The protein resides in the cilium basal body. The catalysed reaction is ATP + H2O = ADP + phosphate + H(+). Functionally, component of the chaperonin-containing T-complex (TRiC), a molecular chaperone complex that assists the folding of actin, tubulin and other proteins upon ATP hydrolysis. The chain is T-complex protein 1 subunit theta from Gallus gallus (Chicken).